The chain runs to 280 residues: Hydrolase MT0498 (280 aa).

Positions 1–251 constitute a CN hydrolase domain; the sequence is MRIALAQIRS…PQLLVADIDV (251 aa). E40 serves as the catalytic Proton acceptor. The active-site Proton donor is K110. C146 (nucleophile) is an active-site residue.

Belongs to the carbon-nitrogen hydrolase superfamily. NIT1/NIT2 family.

The protein is Hydrolase MT0498 of Mycobacterium tuberculosis (strain CDC 1551 / Oshkosh).